We begin with the raw amino-acid sequence, 71 residues long: MARITVEDCLKRIPNRFQLTLAATYRARQLTAGGTPQIELDPHDKDKPTVIALREVAAGKVGLEMLNRGQA.

It belongs to the RNA polymerase subunit omega family. In terms of assembly, the RNAP catalytic core consists of 2 alpha, 1 beta, 1 beta' and 1 omega subunit. When a sigma factor is associated with the core the holoenzyme is formed, which can initiate transcription.

The enzyme catalyses RNA(n) + a ribonucleoside 5'-triphosphate = RNA(n+1) + diphosphate. In terms of biological role, promotes RNA polymerase assembly. Latches the N- and C-terminal regions of the beta' subunit thereby facilitating its interaction with the beta and alpha subunits. The polypeptide is DNA-directed RNA polymerase subunit omega (Azoarcus sp. (strain BH72)).